The sequence spans 142 residues: Large ribosomal subunit protein uL23 (142 aa).

A Glycyl lysine isopeptide (Lys-Gly) (interchain with G-Cter in SUMO) cross-link involves residue Lys-61.

The protein belongs to the universal ribosomal protein uL23 family. As to quaternary structure, component of the large ribosomal subunit (LSU). Mature yeast ribosomes consist of a small (40S) and a large (60S) subunit. The 40S small subunit contains 1 molecule of ribosomal RNA (18S rRNA) and 33 different proteins (encoded by 57 genes). The large 60S subunit contains 3 rRNA molecules (25S, 5.8S and 5S rRNA) and 46 different proteins (encoded by 81 genes). uL23 is associated with the polypeptide exit tunnel.

The protein resides in the cytoplasm. Its function is as follows. Component of the ribosome, a large ribonucleoprotein complex responsible for the synthesis of proteins in the cell. The small ribosomal subunit (SSU) binds messenger RNAs (mRNAs) and translates the encoded message by selecting cognate aminoacyl-transfer RNA (tRNA) molecules. The large subunit (LSU) contains the ribosomal catalytic site termed the peptidyl transferase center (PTC), which catalyzes the formation of peptide bonds, thereby polymerizing the amino acids delivered by tRNAs into a polypeptide chain. The nascent polypeptides leave the ribosome through a tunnel in the LSU and interact with protein factors that function in enzymatic processing, targeting, and the membrane insertion of nascent chains at the exit of the ribosomal tunnel. uL23 is a major component of the universal docking site for these factors at the polypeptide exit tunnel. The sequence is that of Large ribosomal subunit protein uL23 from Saccharomyces cerevisiae (strain ATCC 204508 / S288c) (Baker's yeast).